Reading from the N-terminus, the 356-residue chain is 4-hydroxy-2-oxovalerate aldolase (356 aa).

Positions 7–257 (PRVTDTTLRD…NPGLDVFKLM (251 aa)) constitute a Pyruvate carboxyltransferase domain. 15 to 16 (RD) contacts substrate. Asp16 serves as a coordination point for Mn(2+). His19 acts as the Proton acceptor in catalysis. Substrate-binding residues include Ser169 and His196. His196 and His198 together coordinate Mn(2+). Substrate is bound at residue Tyr287.

Belongs to the 4-hydroxy-2-oxovalerate aldolase family.

It catalyses the reaction (S)-4-hydroxy-2-oxopentanoate = acetaldehyde + pyruvate. This chain is 4-hydroxy-2-oxovalerate aldolase, found in Thermomicrobium roseum (strain ATCC 27502 / DSM 5159 / P-2).